The primary structure comprises 282 residues: Cell division protein FtsQ (282 aa).

Topologically, residues 1 to 30 (MINIGPPKKRRLRRKGNRFKKTRRVIPWRR) are cytoplasmic. A helical transmembrane segment spans residues 31–51 (LMIGALWGTMALASLGMVVAV). Residues 52–282 (ACFAGQMLFA…LDAGELRGKG (231 aa)) are Periplasmic-facing. The region spanning 65-133 (FKVERIQVEN…DQLVIRVDER (69 aa)) is the POTRA domain.

The protein belongs to the FtsQ/DivIB family. FtsQ subfamily.

It is found in the cell inner membrane. Functionally, essential cell division protein. In Syntrophotalea carbinolica (strain DSM 2380 / NBRC 103641 / GraBd1) (Pelobacter carbinolicus), this protein is Cell division protein FtsQ.